The primary structure comprises 276 residues: 2-dehydro-3-deoxyphosphooctonate aldolase (276 aa).

It belongs to the KdsA family.

The protein resides in the cytoplasm. It catalyses the reaction D-arabinose 5-phosphate + phosphoenolpyruvate + H2O = 3-deoxy-alpha-D-manno-2-octulosonate-8-phosphate + phosphate. Its pathway is carbohydrate biosynthesis; 3-deoxy-D-manno-octulosonate biosynthesis; 3-deoxy-D-manno-octulosonate from D-ribulose 5-phosphate: step 2/3. It functions in the pathway bacterial outer membrane biogenesis; lipopolysaccharide biosynthesis. This chain is 2-dehydro-3-deoxyphosphooctonate aldolase, found in Xylella fastidiosa (strain 9a5c).